Consider the following 711-residue polypeptide: Zinc finger protein 175 (711 aa).

A compositionally biased stretch (polar residues) spans 1–11 (MPADVNLSQKP). The disordered stretch occupies residues 1-21 (MPADVNLSQKPQVLGPEKQDG). The region spanning 27 to 98 (VSFEDVTVDF…EAEVSHQRCQ (72 aa)) is the KRAB domain. The segment at 279–301 (DGCSECGGSFTQKSHLFAQQRIH) adopts a C2H2-type 1; atypical zinc-finger fold. The C2H2-type 2; atypical zinc-finger motif lies at 307 to 329 (HECGKCGKAFMPQLKLSVYLTDH). The C2H2-type 3 zinc finger occupies 335–357 (CICKECGKVFIQRSELLTHQKTH). The short motif at 359 to 362 (RKKP) is the Nuclear localization signal element. C2H2-type zinc fingers lie at residues 363 to 385 (YKCH…QRTH), 391 to 413 (YECS…QKIH), 419 to 441 (YACS…QRIH), 447 to 469 (YVCI…QRSH), 475 to 497 (YQCH…HRIH), 503 to 525 (YECS…QKIH), 531 to 553 (HVCS…QRIH), 559 to 581 (YKCS…QRIH), 587 to 609 (YVCT…QITH), 615 to 637 (FVCY…QRTH), 643 to 665 (YECL…QRIH), and 671 to 693 (YVCS…QTTH).

It belongs to the krueppel C2H2-type zinc-finger protein family. As to expression, ubiquitous.

The protein resides in the cytoplasm. It is found in the nucleus. Functionally, down-regulates the expression of several chemokine receptors. Interferes with HIV-1 replication by suppressing Tat-induced viral LTR promoter activity. The chain is Zinc finger protein 175 (ZNF175) from Homo sapiens (Human).